The following is a 176-amino-acid chain: NAD(P)H-quinone oxidoreductase subunit 6, chloroplastic (176 aa).

Helical transmembrane passes span 10-30, 32-52, 61-81, 95-115, and 152-172; these read FLLVFLGSGLLFGSLGVVLFP, PIFSAFSLGFVLVCISLLYIL, AQLLIYVGAITVLIIFAVMFM, VGDGITSVICTTILFSLISTI, and FFLPFELISIILLVALIGAIS.

Belongs to the complex I subunit 6 family. In terms of assembly, NDH is composed of at least 16 different subunits, 5 of which are encoded in the nucleus.

The protein localises to the plastid. Its subcellular location is the chloroplast thylakoid membrane. It catalyses the reaction a plastoquinone + NADH + (n+1) H(+)(in) = a plastoquinol + NAD(+) + n H(+)(out). The enzyme catalyses a plastoquinone + NADPH + (n+1) H(+)(in) = a plastoquinol + NADP(+) + n H(+)(out). Its function is as follows. NDH shuttles electrons from NAD(P)H:plastoquinone, via FMN and iron-sulfur (Fe-S) centers, to quinones in the photosynthetic chain and possibly in a chloroplast respiratory chain. The immediate electron acceptor for the enzyme in this species is believed to be plastoquinone. Couples the redox reaction to proton translocation, and thus conserves the redox energy in a proton gradient. The polypeptide is NAD(P)H-quinone oxidoreductase subunit 6, chloroplastic (ndhG) (Aethionema cordifolium (Lebanon stonecress)).